A 544-amino-acid chain; its full sequence is Esterase-6 (544 aa).

The first 21 residues, 1 to 21 (MNYVGLGLIIVLSCLWLGSNA), serve as a signal peptide directing secretion. The N-linked (GlcNAc...) asparagine glycan is linked to N42. Cysteines 86 and 105 form a disulfide. The Acyl-ester intermediate role is filled by S209. An intrachain disulfide couples C261 to C273. N420 and N456 each carry an N-linked (GlcNAc...) asparagine glycan. The active-site Charge relay system is H466. A glycan (N-linked (GlcNAc...) asparagine) is linked at N506. Cysteines 514 and 535 form a disulfide.

This sequence belongs to the type-B carboxylesterase/lipase family. As to quaternary structure, monomer. Specifically expressed in the ejaculatory bulbs of male.

Its subcellular location is the secreted. The enzyme catalyses a carboxylic ester + H2O = an alcohol + a carboxylate + H(+). Functionally, transferred from the ejaculatory bulbs of males to the female genitals upon copulation, plays an important role in the reproductive biology. The polypeptide is Esterase-6 (Est-6) (Drosophila melanogaster (Fruit fly)).